The chain runs to 275 residues: Hemin import ATP-binding protein HmuV (275 aa).

Residues 2–242 form the ABC transporter domain; sequence LKAAGIGVRL…EWIETGFGLQ (241 aa). An ATP-binding site is contributed by 34–41; the sequence is GPNGAGKS.

Belongs to the ABC transporter superfamily. Heme (hemin) importer (TC 3.A.1.14.5) family. In terms of assembly, the complex is composed of two ATP-binding proteins (HmuV), two transmembrane proteins (HmuU) and a solute-binding protein (HmuT).

Its subcellular location is the cell inner membrane. Functionally, part of the ABC transporter complex HmuTUV involved in hemin import. Responsible for energy coupling to the transport system. In Gloeobacter violaceus (strain ATCC 29082 / PCC 7421), this protein is Hemin import ATP-binding protein HmuV.